Here is a 141-residue protein sequence, read N- to C-terminus: Large ribosomal subunit protein uL16c (141 aa).

The span at methionine 1–leucine 17 shows a compositional bias: basic residues. A disordered region spans residues methionine 1–threonine 20.

This sequence belongs to the universal ribosomal protein uL16 family. In terms of assembly, part of the 50S ribosomal subunit.

It is found in the plastid. Its subcellular location is the chloroplast. The sequence is that of Large ribosomal subunit protein uL16c from Staurastrum punctulatum (Green alga).